A 340-amino-acid polypeptide reads, in one-letter code: DNA-directed RNA polymerase subunit alpha (340 aa).

The segment at 1–238 is alpha N-terminal domain (alpha-NTD); the sequence is MVDPIVTKNW…EQLSIFINFD (238 aa). An alpha C-terminal domain (alpha-CTD) region spans residues 255–340; the sequence is LNENLFRSVD…AAPQGGAPKV (86 aa).

This sequence belongs to the RNA polymerase alpha chain family. Homodimer. The RNAP catalytic core consists of 2 alpha, 1 beta, 1 beta' and 1 omega subunit. When a sigma factor is associated with the core the holoenzyme is formed, which can initiate transcription.

The enzyme catalyses RNA(n) + a ribonucleoside 5'-triphosphate = RNA(n+1) + diphosphate. In terms of biological role, DNA-dependent RNA polymerase catalyzes the transcription of DNA into RNA using the four ribonucleoside triphosphates as substrates. This Anaeromyxobacter dehalogenans (strain 2CP-1 / ATCC BAA-258) protein is DNA-directed RNA polymerase subunit alpha.